A 331-amino-acid polypeptide reads, in one-letter code: Phosphoenolpyruvate transferase (331 aa).

Position 63 (D63) interacts with 7,8-didemethyl-8-hydroxy-5-deazariboflavin.

Belongs to the CofD family. Homodimer. Requires Mg(2+) as cofactor.

The catalysed reaction is enolpyruvoyl-2-diphospho-5'-guanosine + 7,8-didemethyl-8-hydroxy-5-deazariboflavin = dehydro coenzyme F420-0 + GMP + H(+). Its pathway is cofactor biosynthesis; coenzyme F420 biosynthesis. In terms of biological role, catalyzes the transfer of the phosphoenolpyruvate moiety from enoylpyruvoyl-2-diphospho-5'-guanosine (EPPG) to 7,8-didemethyl-8-hydroxy-5-deazariboflavin (FO) with the formation of dehydro coenzyme F420-0 and GMP. The chain is Phosphoenolpyruvate transferase from Mycobacterium sp. (strain KMS).